The sequence spans 1132 residues: MSAKKPVQSKLNIGNPTIPVTSNRSTAPKPVPGQPQFVNQEKKQQSQNTTTGAFRSNQNNANSGGNGNFELDDLHLALKSCNEIGSAKTLFCFFMELQKINDKIPSKKNTELIKNDPQFQYFCHNTILCTEQSYDEKTIEKLAKLEYKLEYKNSYIDMISKVIKELLIENKLNKLQTFGYKLVNNEFGNQNHLGMMQQNQDSSHNSNFMVKCDYINLNKQCMITKNWEKVYFYLGDHLFMHIYKEYMIFLKTRDESLVQISGTNIFCYLNEKLGRLQAAFYEGPNKNAANSAAQGSNPEANDLISAEQRKINTAIVMKKTHKYNIKAADESYLTNQEKGFWDDQIKRNRLFYCAHQNRFFQKHILNSKTLSQQQIRDNIYKEVFGFNRVRAELKGKVMSIIEQVIVNQKKFDFKYYLSKNCPLPENWKNLKKSFLEDAAVSGELRGQVFRQLFEYQQDQRQISNFLTEFVANVFPKNFLEGKNKKIFNKKMLQFVKFNRFESFTKISLLNKFRVNEVSWLSFKCKDENKKFFMNENEHVFFKVLKWVFEDLAITLMRCYFYSTEKAKEYQRIFYYRKNIWNMIMRLSIDDLLKQNLKQVEKKEMRIFCESQNFAPGKLRLIPKGDTFRPIMTFNRKIPNQVGKFQSRMTTNNKLQTAHMMLKNLKSKMFKHSFGFAVFNYDDIMKRYENFVQKWKQINSPKLYFVAMDIEKCYDNVDCERVVNFLQKSDLMDKEYFILNTFVLKRKNNIIVERSNFRKLPIKQYFRYKFQKIGIDGSSYPTLFEILEDEFNDLNMKRTIIVEQEQRKKFPKNDLLQPVLKICQNNYVTFNKKQYKQMKGIPQGLCVSYILSSFYYANLEENALQFLRKESMDPEKPEINLLMRLTDDYLLMTTEKNNAMLFIEKLYQLSLGNFFKFHMKKLKTNFALNLQKIGCTNTTQDIDSINDDLFHWIGISIDIKTLNIIQNINIKKEGILCTLNVNMQTNESILWLKKKLKSFLMNNISFYFKSTINTKQFANITLSKLYIAAAEKYVACCQEFKRFHENTSLGGQNIDIKIIHIIYVVIRSFFKYLVCNVKSPVFERDDYQQFFIYSLKFFITRFKQQKNEFAGVYKILKAKEKKLEVAKIEFQIQ.

A disordered region spans residues 1–66 (MSAKKPVQSK…NQNNANSGGN (66 aa)). Polar residues-rich tracts occupy residues 9 to 26 (SKLNIGNPTIPVTSNRST) and 45 to 55 (QSQNTTTGAFR). In terms of domain architecture, Reverse transcriptase spans 602-956 (KEMRIFCESQ…DLFHWIGISI (355 aa)). Mg(2+) contacts are provided by aspartate 708, aspartate 886, and aspartate 887.

Belongs to the reverse transcriptase family. Telomerase subfamily.

It localises to the nucleus. Its subcellular location is the chromosome. It is found in the telomere. It catalyses the reaction DNA(n) + a 2'-deoxyribonucleoside 5'-triphosphate = DNA(n+1) + diphosphate. Its function is as follows. Telomerase is a ribonucleoprotein enzyme essential for the replication of chromosome termini in most eukaryotes. It elongates telomeres. It is a reverse transcriptase that adds simple sequence repeats to chromosome ends by copying a template sequence within the RNA component of the enzyme. In Oxytricha trifallax (Sterkiella histriomuscorum), this protein is Telomerase reverse transcriptase (TERT).